A 1497-amino-acid polypeptide reads, in one-letter code: MILRRLLLAGSLLLATAFTSAKKADGPKISVTKFKDEPVNLFYFDDSDTVMFQDGKNGDVYVSRDAGANWDIVDVSGMRGKAWSLLPHPTDRTKAYIMSKGGTHWVTEDQAKSWREFTVDAELSRYEYPLVFHGKDSNRVMLLGHKCNGLDCKERTYYTTDGFKTVHLLMENGRHCAWAVSTPTFGEGLDLPKEVNDRIFCVVSGLHSSWAEANRLLYSDRFFKDEQGTEVPLDNGRAVSGVIRTASVQKYILAATKSARTNELALFVTDDASTWHRTEFDGHRVEEDAYTILESTSYSLQVDVVSTYSSTIGTLFTSNSNGTYFTRNIEHTNRNMYGFVDFEKISSIQGIILVNTVKNWEDVEKSNGVQKKVISKISFDDGRTFQPLKVGKHDLHLHSVTDATNSGRVFSSPAPGLVMGVGNTGGHLKDYLDGDLFVSDDAGINWRKALDDAHKYEFGDQGSVIVAVFDEGRTDKISYSLDHGKNWHKASLPDGVQIRAKVLTTAPGSTTLKFLLLGSAKADIGMEYYIISIDFAEMEERTCEEKDFENWPARLNEKNEPDCLMGHKQFYRRRKAQADCFIKKKFEEPAPEFERCKCTEEDFECDFNFVRGEDGKSCIPSRSLIAPEGVCKNPDDKFTGSSGFRLIPGNVCIREGGVDLDKQTERVCSETFKNPPAGQIVVEKSFFTADYYKDYFYLERKESSKGEDETVIMITSEQQIFLSRDHGKKWKQILEEEKITRIEPHRFFDDVAYFLTNNGDGWYTLDRGDTFRKFKAPLPPNQDKLPVLSFHPDRRDWLIWTGADECNGNGGNCHSVAYYTTNLGGEWHFLMRYVRRCEFISRDARGSSDKLVFCEQFENENPSNKHLQLLSTEDWFAEKRLHYSNILDFATMQEFIIVAIRGENSQDSLRIGVSIDGKTFADAELPANVQIPIQRAYTVLESRTHAAFLHVTINNIEDHEYGSIIKSNSNGTSYVLSLSAVNRNSRGYADFEKMQGLEGVAMANVVGNVADVENGAAKKFRTMITHNDGAEWTLMRPPDKDSEGRSYACSTKGGKPTDACALHLHSYTERADPRDTYSSPSAVGIMIGTGNVGDYLSLKSKADTFITRDAGITWEEVKKGKYQWEFGDSGSIIVLVPESTPTKTLLYSLDEGRSWKDFEFSEVEMQIQDISTVPSDTSRNFLLWGKEVGQGKKPGLATVNIDFSGLKERSKQCVLDEKKPEADDYYLWEPKHPLQPNGCLFGHRAKYHRKRPDKDCYNGRELQHLDSIGDICECTRSDYECDYNYEPQSDGSCARVAGLEPLDPKLVCTENPKAVEWYEPTGYRRIPLTKCQGGKQLNHIVAHPCPNKEEEFFKKHPRLRGIGLFFVILIPICLAATAGYYVYNHWDGKFGRIRLGETGSGGLFDRDSLLVSIPVSMVAGVVAVITALPLLVSSLWRSVSGYVRVPGGASSRRPYSSRDSFAARRSDYVGVVEDEDELLGTDDFDDDEEGDERNGQV.

An N-terminal signal peptide occupies residues 1 to 21 (MILRRLLLAGSLLLATAFTSA). Topologically, residues 22–1361 (KKADGPKISV…FFKKHPRLRG (1340 aa)) are lumenal. The stretch at 61–71 (YVSRDAGANWD) is one BNR 1 repeat. The N-linked (GlcNAc...) asparagine glycan is linked to Asn-321. BNR repeat units follow at residues 377-386 (ISFDDGRTFQ), 437-447 (FVSDDAGINWR), 479-489 (YSLDHGKNWHK), and 721-731 (FLSRDHGKKWK). Residue Asn-970 is glycosylated (N-linked (GlcNAc...) asparagine). BNR repeat units follow at residues 1105–1115 (FITRDAGITWE) and 1147–1156 (YSLDEGRSWK). A helical membrane pass occupies residues 1362–1382 (IGLFFVILIPICLAATAGYYV). Residues 1383-1408 (YNHWDGKFGRIRLGETGSGGLFDRDS) are Cytoplasmic-facing. Residues 1409–1429 (LLVSIPVSMVAGVVAVITALP) traverse the membrane as a helical segment. Over 1430–1497 (LLVSSLWRSV…EEGDERNGQV (68 aa)) the chain is Lumenal. Positions 1474–1491 (DEDELLGTDDFDDDEEGD) are enriched in acidic residues. Positions 1474 to 1497 (DEDELLGTDDFDDDEEGDERNGQV) are disordered.

The protein belongs to the VPS10-related sortilin family.

The protein localises to the golgi apparatus. The protein resides in the trans-Golgi network membrane. It localises to the prevacuolar compartment membrane. In terms of biological role, functions as a sorting receptor in the Golgi compartment required for the intracellular sorting and delivery of soluble vacuolar proteins, like carboxypeptidase Y (CPY) and proteinase A. Executes multiple rounds of sorting by cycling between the late Golgi and a prevacuolar endosome-like compartment. The chain is Vacuolar protein sorting/targeting protein 10 (VPS10) from Ajellomyces capsulatus (strain G186AR / H82 / ATCC MYA-2454 / RMSCC 2432) (Darling's disease fungus).